Reading from the N-terminus, the 1690-residue chain is MSGAPPYNPQSPTQQSRYPVYSPPNKNRPFYSNNDQYQQHPPHTPPAYPSQPAAMSRSPHHPHAQSPLPGTLPPLNGAAPPPHHPDASSQFQPHAAAGTPQYSLPRPYSGSVLSSNGTTPYGPSTASHAHPSARPDGPPHLSPKKEMEPSFSMGSHGVPGYPPSAMREPRLASPPKEVKPARAADPMSFASILSGPTEDRPPPRKPSPPEVAPAPLALAPASAARQSPPLPISARAPPLSKEPEPAPVTPLPRLEKKPSSEKRRRNVDQEPKMGELSVPPTNGLLDPAKAAVQPRAPPRKTLSERETEYINRVMAELDSMEKSDVESPGFEWELERYTAKGKKRAMDAERAESVRRKRRRHDFLIKLGKTFEKQASAGMDRFRMANESSVVAEVQAKEVQDEKERKKDMQRKRRRENTVRLEMQKKLEAERKANKAQDSAEKAKFLREAERAQRKIKTTKRALEGVTAPEEIGEVTPLAPNLEGGTTSSFHIGRSPSRRKSGRGGPVTRPKKSKEQKQAEKDAAEAAYAALENEELLPLAPRDDRKDVLRKDGKGVLSKEATPIPLSSYESKGYNQIYEQIWRDIARKDIPKVYRIKVLSLSTRQENLRKTAQLASKQSRKWQERTNKSMKDTQARAKRTMREMMSFWKRNEREERDLRRLAEKQEIESAKKAEAEREANRQRRKLNFLISQTELYSHFIGRKIKGAEGDESGDTAVEGANEAAQSKMDVPAGALKAGAGVTNFEDLDFDAEDETALQQAAMANAQNAVQQAQDRARAFNNTKDDPMAAMDEGELNFQNPTSLGDIEISQPSMLTAKLKEYQLKGLNWLVNLYEQGINGILADEMGLGKTIQSISVMAYLAEVHNIWGPFLVIAPASTLHNWQQEITKFVPDIKVLPYWGSAKDRKILRKFWDRKHITYTKESEFHVLVTSYQLVVLDAQYFQKVKWQYMILDEAQAIKSSQSSRWKNLLGFHCRNRLLLTGTPIQNNMQELWALLHFIMPTLFDSHDEFSEWFSKDIESHAQSNTKLNEDQLKRLHMILKPFMLRRVKKHVQQELGDKVEKDVFCDLTYRQRAYYTGLRDRVSIMDLIEKAAVGDEADSTTLMNLVMQFRKVCNHPDLFERAETKSPLTTAYFAETASFVREGQFVDVGYSTRSLIEYPLPRLLCSSAGRVDVAGPDNLHAGFRGKYLAHMMNVFAPENIKQSIQEDGAFSFLRFIDTSMGDAYEQSHRGVFERALSRRGQPNRLSRLNVVYEEDEGDAPLAHTMLNIVARNDQSAVHEITPDGYMRELMTVSQSTFEREGLNVIEPCASPAASAPPVTITSSSPAAQIEMSDALFNVPVRHALFSTPTRQLEEQILEKKLDPVPYSHPPMLPKPTSLKGRYTHIEVPSMRRFVTDSGKLAKLDELLRELKAGGHRVLLYFQMTRMIDLMEEYLTYRNYKYCRLDGSTKLEDRRDTVADFQQRPEIFVFLLSTRAGGLGINLTAADTVIFYDSDWNPTIDSQAMDRAHRLGQTRQVTVYRLITRGTIEERIRKRALQKEEVQRVVITGGAAGGVDFNTRNRESRTKDIAMWLADDEQAELIEQKEKEALDRGEVFGASKGGKKAAQKRKRDITLDDMYHEGEGNFDDASAKPSGAATPVSTADVGGTPSSTPVPKRGRGRGTGKGTSKRAKTTKERLRLIDGDGGLGPM.

Disordered stretches follow at residues 1-306 (MSGA…SERE), 395-527 (QAKE…AEAA), and 618-637 (QSRKWQERTNKSMKDTQARA). 2 stretches are compositionally biased toward polar residues: residues 30–41 (FYSNNDQYQQHP) and 111–127 (SVLSSNGTTPYGPSTAS). Residues 213 to 227 (PAPLALAPASAARQS) show a composition bias toward low complexity. 5 stretches are compositionally biased toward basic and acidic residues: residues 253 to 273 (RLEKKPSSEKRRRNVDQEPKM), 395 to 407 (QAKEVQDEKERKK), 416 to 453 (ENTVRLEMQKKLEAERKANKAQDSAEKAKFLREAERAQ), 513 to 524 (SKEQKQAEKDAA), and 621 to 635 (KWQERTNKSMKDTQA). Positions 392-468 (AEVQAKEVQD…TKRALEGVTA (77 aa)) form a coiled coil. Residues 581-706 (IWRDIARKDI…SHFIGRKIKG (126 aa)) form the DBINO domain. Residues 623 to 694 (QERTNKSMKD…KLNFLISQTE (72 aa)) are a coiled coil. Residues 830 to 1002 (VNLYEQGING…WALLHFIMPT (173 aa)) form the Helicase ATP-binding domain. 843–850 (DEMGLGKT) is an ATP binding site. Residues 953–956 (DEAQ) carry the DEAQ box motif. The Helicase C-terminal domain occupies 1403 to 1563 (KLDELLRELK…GVDFNTRNRE (161 aa)). The tract at residues 1619–1690 (YHEGEGNFDD…IDGDGGLGPM (72 aa)) is disordered. The span at 1656 to 1672 (KRGRGRGTGKGTSKRAK) shows a compositional bias: basic residues. The span at 1673 to 1682 (TTKERLRLID) shows a compositional bias: basic and acidic residues.

Belongs to the SNF2/RAD54 helicase family. Component of the INO80 chromatin-remodeling complex.

The protein localises to the nucleus. It carries out the reaction ATP + H2O = ADP + phosphate + H(+). Its function is as follows. ATPase component of the INO80 complex which remodels chromatin by shifting nucleosomes and is involved in DNA repair. This chain is Chromatin-remodeling ATPase INO80 (ino80), found in Aspergillus terreus (strain NIH 2624 / FGSC A1156).